We begin with the raw amino-acid sequence, 104 residues long: Probable guanidinium efflux system subunit GdnD (104 aa).

Helical transmembrane passes span 3–23, 31–51, 58–78, and 84–104; these read WICL…MNQF, WIFL…LAME, AYAV…ILFY, and GKRI…KLIS.

Belongs to the drug/metabolite transporter (DMT) superfamily. Small multidrug resistance (SMR) (TC 2.A.7.1) family. YkkC/YkkD subfamily. As to quaternary structure, the efflux pump is composed of GdnC and GdnD.

The protein localises to the cell membrane. Its function is as follows. Probably involved in guanidinium transport. In Bacillus licheniformis (strain ATCC 14580 / DSM 13 / JCM 2505 / CCUG 7422 / NBRC 12200 / NCIMB 9375 / NCTC 10341 / NRRL NRS-1264 / Gibson 46), this protein is Probable guanidinium efflux system subunit GdnD.